Consider the following 228-residue polypeptide: 2-C-methyl-D-erythritol 4-phosphate cytidylyltransferase (228 aa).

It belongs to the IspD/TarI cytidylyltransferase family. IspD subfamily.

It carries out the reaction 2-C-methyl-D-erythritol 4-phosphate + CTP + H(+) = 4-CDP-2-C-methyl-D-erythritol + diphosphate. Its pathway is isoprenoid biosynthesis; isopentenyl diphosphate biosynthesis via DXP pathway; isopentenyl diphosphate from 1-deoxy-D-xylulose 5-phosphate: step 2/6. Its function is as follows. Catalyzes the formation of 4-diphosphocytidyl-2-C-methyl-D-erythritol from CTP and 2-C-methyl-D-erythritol 4-phosphate (MEP). The protein is 2-C-methyl-D-erythritol 4-phosphate cytidylyltransferase of Mannheimia succiniciproducens (strain KCTC 0769BP / MBEL55E).